A 2595-amino-acid polypeptide reads, in one-letter code: Glucosylceramide transporter ABCA12 (2595 aa).

Residues Pro23 to Thr43 form a helical membrane-spanning segment. The span at Leu109–Ser119 shows a compositional bias: basic and acidic residues. The segment at Leu109 to Pro143 is disordered. Asn120, Asn156, Asn174, Asn214, Asn275, Asn331, Asn365, Asn381, Asn410, Asn433, Asn455, Asn526, Asn541, Asn574, Asn605, Asn645, Asn749, Asn773, Asn812, Asn823, Asn854, Asn917, and Asn960 each carry an N-linked (GlcNAc...) asparagine glycan. Over residues Asn120 to Ala137 the composition is skewed to polar residues. 3 helical membrane-spanning segments follow: residues Val1062–Val1082, Phe1109–Ile1129, and Phe1142–Ile1162. N-linked (GlcNAc...) asparagine glycosylation is present at Asn1167. 3 helical membrane-spanning segments follow: residues Ile1171–Val1191, Leu1197–Ser1217, and Phe1247–Tyr1267. Residue Asn1319 is glycosylated (N-linked (GlcNAc...) asparagine). An ABC transporter 1 domain is found at Val1346 to Thr1577. Gly1378–Thr1385 provides a ligand contact to ATP. Residues Asn1524, Asn1663, Asn1673, Asn1686, Asn1690, and Asn1704 are each glycosylated (N-linked (GlcNAc...) asparagine). The segment at Ser1672 to Ser1703 is disordered. Residues Pro1687 to Ser1703 show a composition bias toward polar residues. A helical membrane pass occupies residues Leu1747 to Leu1767. N-linked (GlcNAc...) asparagine glycans are attached at residues Asn1819, Asn1835, Asn1876, Asn1921, and Asn1952. 7 helical membrane-spanning segments follow: residues Ala1979–Val1999, Phe2035–Ile2055, Leu2072–Phe2092, Val2103–Leu2123, Ile2143–Gln2163, Gly2187–Ile2207, and Ile2270–Gly2290. The region spanning Val2254–His2489 is the ABC transporter 2 domain. An ATP-binding site is contributed by Gly2290–Thr2297. 3 N-linked (GlcNAc...) asparagine glycosylation sites follow: Asn2318, Asn2542, and Asn2547. The segment covering Val2575–Asp2587 has biased composition (polar residues). Positions Val2575–Ser2595 are disordered.

Belongs to the ABC transporter superfamily. ABCA family. In terms of assembly, interacts with NR1H2 and ABCA1; this interaction is required for ABCA1 localization to the cell surface and is necessary for its normal activity and stability. As to expression, expressed in a number of other tissues besides skin, including heart, intestine, stomach, and kidney. Expressed mainly in the granular layer of the skin. Expressed in lung. Expressed in alpha and beta cells of pancreatic islets.

The protein resides in the cytoplasmic vesicle. It localises to the secretory vesicle membrane. It is found in the golgi apparatus membrane. The catalysed reaction is ATP + H2O + phospholipidSide 1 = ADP + phosphate + phospholipidSide 2.. The enzyme catalyses a beta-D-glucosylceramide(in) + ATP + H2O = a beta-D-glucosylceramide(out) + ADP + phosphate + H(+). Its function is as follows. Transports lipids such as glucosylceramides from the outer to the inner leaflet of lamellar granules (LGs) membrane, whereby the lipids are finally transported to the keratinocyte periphery via the trans-Golgi network and LGs and released to the apical surface of the granular keratinocytes to form lipid lamellae in the stratum corneum of the epidermis, which is essential for skin barrier function. In the meantime, participates in the transport of the lamellar granules-associated proteolytic enzymes, in turn regulates desquamation and keratinocyte differentiation. Furthermore, is essential for the regulation of cellular cholesterol homeostasis by regulating ABCA1-dependent cholesterol efflux from macrophages through interaction with NR1H2 and ABCA1. Plays pleiotropic roles in regulating glucose stimulated insulin secretion from beta cells, regulating the morphology and fusion of insulin granules, lipid raft abundance and the actin cytoskeleton. Also involved in lung surfactant biogenesis. The chain is Glucosylceramide transporter ABCA12 from Mus musculus (Mouse).